We begin with the raw amino-acid sequence, 207 residues long: Ribosomal RNA large subunit methyltransferase E (207 aa).

5 residues coordinate S-adenosyl-L-methionine: Gly51, Trp53, Asp69, Asp85, and Asp108. The Proton acceptor role is filled by Lys148.

This sequence belongs to the class I-like SAM-binding methyltransferase superfamily. RNA methyltransferase RlmE family.

The protein resides in the cytoplasm. It catalyses the reaction uridine(2552) in 23S rRNA + S-adenosyl-L-methionine = 2'-O-methyluridine(2552) in 23S rRNA + S-adenosyl-L-homocysteine + H(+). Functionally, specifically methylates the uridine in position 2552 of 23S rRNA at the 2'-O position of the ribose in the fully assembled 50S ribosomal subunit. In Methanospirillum hungatei JF-1 (strain ATCC 27890 / DSM 864 / NBRC 100397 / JF-1), this protein is Ribosomal RNA large subunit methyltransferase E.